A 415-amino-acid polypeptide reads, in one-letter code: MRFIFPTIAVLLEASMIVLFGFFVKYETEQNAIQQPNSTNSTKVDRSLELYPLFQDVHVMIFVGFGFLMTFLKKYGFSSVGINLLIAALGLQWGTFVQGMVHRHGQTIYIGIKNMINADFSTATVLISFGAVLGKISPTQMLIMTIIEITVFAGNEYVVGEIFQASDIGASMTIHAFGAYFGLAVAGVLYRTGLRKGHEKEESEYHSDLFAMIGTLFLWMFWPSFNSAIAETAEEQYLAIINTYLSLVACVLTAYAMSSLVGHRGKLDMVHIQNATLAGGVAVGTCADMKIHPYGSLIIGSIAGMVSVLGFRFLTPCLTAKLRIHDTCGVHNLHGLPGVVGGLSSIVAILLGVSTASSMTMQAAALGSSIGSAIAGGLITGLILRFIVRGQPSKDNFFDDSVYWEVPKEKELDNV.

The Cytoplasmic portion of the chain corresponds to 1–2; sequence MR. A helical membrane pass occupies residues 3-23; sequence FIFPTIAVLLEASMIVLFGFF. The Extracellular portion of the chain corresponds to 24–51; that stretch reads VKYETEQNAIQQPNSTNSTKVDRSLELY. N-linked (GlcNAc...) asparagine glycosylation is found at N37 and N40. The chain crosses the membrane as a helical span at residues 52-72; that stretch reads PLFQDVHVMIFVGFGFLMTFL. Residues 73 to 76 lie on the Cytoplasmic side of the membrane; the sequence is KKYG. Residues 77–97 traverse the membrane as a helical segment; sequence FSSVGINLLIAALGLQWGTFV. Residues 98–115 lie on the Extracellular side of the membrane; sequence QGMVHRHGQTIYIGIKNM. The chain crosses the membrane as a helical span at residues 116-136; it reads INADFSTATVLISFGAVLGKI. Residues 137–142 lie on the Cytoplasmic side of the membrane; that stretch reads SPTQML. Residues 143 to 163 form a helical membrane-spanning segment; the sequence is IMTIIEITVFAGNEYVVGEIF. The Extracellular segment spans residues 164-167; that stretch reads QASD. A helical transmembrane segment spans residues 168–188; that stretch reads IGASMTIHAFGAYFGLAVAGV. The Cytoplasmic portion of the chain corresponds to 189–208; that stretch reads LYRTGLRKGHEKEESEYHSD. A helical transmembrane segment spans residues 209–229; that stretch reads LFAMIGTLFLWMFWPSFNSAI. The Extracellular portion of the chain corresponds to 230 to 236; the sequence is AETAEEQ. A helical membrane pass occupies residues 237–257; that stretch reads YLAIINTYLSLVACVLTAYAM. The Cytoplasmic portion of the chain corresponds to 258 to 268; it reads SSLVGHRGKLD. The chain crosses the membrane as a helical span at residues 269-287; the sequence is MVHIQNATLAGGVAVGTCA. Over 288–290 the chain is Extracellular; it reads DMK. The helical transmembrane segment at 291 to 311 threads the bilayer; it reads IHPYGSLIIGSIAGMVSVLGF. Residues 312–332 lie on the Cytoplasmic side of the membrane; sequence RFLTPCLTAKLRIHDTCGVHN. A helical transmembrane segment spans residues 333–353; sequence LHGLPGVVGGLSSIVAILLGV. Topologically, residues 354–363 are extracellular; that stretch reads STASSMTMQA. Residues 364-384 form a helical membrane-spanning segment; sequence AALGSSIGSAIAGGLITGLIL. Topologically, residues 385-415 are cytoplasmic; sequence RFIVRGQPSKDNFFDDSVYWEVPKEKELDNV.

The protein belongs to the ammonium transporter (TC 2.A.49) family. Rh subfamily. As to quaternary structure, homodimer. Heterotrimer; a RHCE monomer interacts with a RHAG homodimer. Component of the ankyrin-1 complex in the erythrocyte, composed of ANK1, RHCE, RHAG, SLC4A1, EPB42, GYPA, GYPB and AQP1. Interacts with GYPB (via the N-terminal); this interaction bridges the (RHAG)2(RHCE) heterotrimer with the SLC4A1 Band 3 I dimer complexed with GYPA. Glycosylated.

Its subcellular location is the membrane. The enzyme catalyses methylamine(out) = methylamine(in). The catalysed reaction is NH4(+)(in) = NH4(+)(out). It carries out the reaction CO2(out) = CO2(in). Functionally, component of the ankyrin-1 complex, a multiprotein complex involved in the stability and shape of the erythrocyte membrane. Heterotrimer with RHCE (RHAG)2(RHCE), that transports ammonium and its related derivative methylammonium, in both neutral and ionic forms, across the erythrocyte membrane. The transport of NH4(+) is electrogenic and masks the NH3 transport. Also, may act as a CO2 channel. Moreover in erythrocyte, regulates RHD membrane expression and is associated with rhesus blood group antigen expression. This chain is Ammonium transporter Rh type A, found in Canis lupus familiaris (Dog).